The chain runs to 269 residues: Voltage-gated hydrogen channel 1 (269 aa).

The Cytoplasmic portion of the chain corresponds to 1-96; that stretch reads MTSHDPKAVT…RLRKLFSSHR (96 aa). The residue at position 29 (T29) is a Phosphothreonine. Positions 46–79 are disordered; sequence ENEEEEEEPAPTSAEGEGNAEGPDAEAGSASTPR. S93 bears the Phosphoserine mark. A helical membrane pass occupies residues 97 to 117; that stretch reads FQVIIICLVVLDALLVLAELL. Topologically, residues 118–134 are extracellular; that stretch reads LDLKIIEPDEQDYAVTA. The helical transmembrane segment at 135–157 threads the bilayer; the sequence is FHYMSFAILVFFMLEIFFKIFVF. At 158–165 the chain is on the cytoplasmic side; it reads RLEFFHHK. Residues 166–186 traverse the membrane as a helical segment; that stretch reads FEILDAFVVVVSFVLDLVLLF. At 187 to 193 the chain is on the extracellular side; that stretch reads KSHHFEA. Residues 194–214 traverse the membrane as a helical segment; it reads LGLLILLRLWRVARIINGIII. The Cytoplasmic segment spans residues 215–269; sequence SVKTRSERQILRLKQINIQLATKIQHLEFSCSEKEQEIERLNKLLKQNGLLGDVN. Residues 221–261 are a coiled coil; it reads ERQILRLKQINIQLATKIQHLEFSCSEKEQEIERLNKLLKQ.

The protein belongs to the voltage-gated proton channel (VPC) (TC 1.A.51) family. In terms of assembly, homodimer; each protomer forms its own proton conduction pathway. In terms of processing, phosphorylated in vitro by PRKCD. Phosphorylation may enhance channel gating. As to expression, enriched in immune tissues, such as bone marrow, macrophages and spleen.

It localises to the cell membrane. It is found in the apical cell membrane. The protein resides in the cytoplasmic vesicle. The protein localises to the phagosome membrane. Its subcellular location is the cell projection. It localises to the cilium. It is found in the flagellum membrane. The enzyme catalyses H(+)(in) = H(+)(out). The dimers display cooperative channel gating. The channel activity is inhibited by zinc ions. Its function is as follows. Voltage-gated proton-selective channel that conducts outward proton currents in response to intracellular acidification. Lacks a canonical ion-channel pore domain and mediates proton permeability via its voltage sensor domain. Provides for proton efflux that compensates for electron charge generated by NADPH oxidase activity either in the extracellular or phagosomal compartments, thus enabling the production of high levels of bactericidal reactive oxygen species during the respiratory burst. Opens when the pH of airway surface liquid exceeds 7 and contributes to respiratory epithelial acid secretion to maintain pH in the mucosa. In Mus musculus (Mouse), this protein is Voltage-gated hydrogen channel 1.